A 467-amino-acid polypeptide reads, in one-letter code: Asparagine--tRNA ligase (467 aa).

The protein belongs to the class-II aminoacyl-tRNA synthetase family. In terms of assembly, homodimer.

The protein resides in the cytoplasm. It catalyses the reaction tRNA(Asn) + L-asparagine + ATP = L-asparaginyl-tRNA(Asn) + AMP + diphosphate + H(+). This chain is Asparagine--tRNA ligase, found in Protochlamydia amoebophila (strain UWE25).